Here is a 144-residue protein sequence, read N- to C-terminus: Small ribosomal subunit protein bS6 (144 aa).

Positions 97–144 (DTEQSLIMKSKDEKGDKPERSERRRRDDEEGDAAPAATDTDGDNAEAA) are disordered. The span at 105–124 (KSKDEKGDKPERSERRRRDD) shows a compositional bias: basic and acidic residues.

It belongs to the bacterial ribosomal protein bS6 family.

Functionally, binds together with bS18 to 16S ribosomal RNA. The protein is Small ribosomal subunit protein bS6 of Xanthomonas campestris pv. campestris (strain 8004).